Consider the following 926-residue polypeptide: OTU domain-containing protein 7A (926 aa).

A disordered region spans residues P75–R99. The span at R82–R99 shows a compositional bias: basic and acidic residues. S119 is modified (phosphoserine). The segment at E168–W410 is TRAF-binding. Positions A183 to T449 are catalytic. The 176-residue stretch at L199 to M374 folds into the OTU domain. D207 is an active-site residue. The Nucleophile role is filled by C210. Catalysis depends on H367, which acts as the Proton acceptor. Disordered stretches follow at residues P452–A514, G537–K613, and E668–R768. Positions V481–K491 are enriched in low complexity. Basic and acidic residues predominate over residues N492–A510. Residues K494 to R509 carry the Nuclear localization signal motif. Composition is skewed to low complexity over residues G576–T592, A677–A691, and P729–T742. R880 carries the omega-N-methylarginine modification. The segment at G884–R919 adopts an A20-type zinc-finger fold. 4 residues coordinate Zn(2+): C890, C895, C907, and C910.

This sequence belongs to the peptidase C64 family.

It localises to the cytoplasm. The protein resides in the nucleus. The catalysed reaction is Thiol-dependent hydrolysis of ester, thioester, amide, peptide and isopeptide bonds formed by the C-terminal Gly of ubiquitin (a 76-residue protein attached to proteins as an intracellular targeting signal).. Its function is as follows. Deubiquitinase, which cleaves 'Lys-11'-linked polyubiquitin chains. Might be required for PA28-20S proteasome assembly. This Homo sapiens (Human) protein is OTU domain-containing protein 7A (OTUD7A).